A 358-amino-acid chain; its full sequence is MIRVTRLLEVKDLAISFKTYGGEVQAIRGVNFHLDKGETLAIVGESGSGKSVTSQAIMKLIPMPPGYFKRGEILFEGKDLVPLSEKEMQNVRGKEIGMIFQDPMTSLNPTMKVGKQITEVLFKHEKISKEAAKKRAVELLELVGIPMPEKRVNQFPHEFSGGMRQRVVIAMALAANPKLLIADEPTTALDVTIQAQILELMKDLQKKIDTSIIFITHDLGVVANVADRVAVMYAGQIVETGTVDEIFYDPRHPYTWGLLASMPTLESSGEEELTAIPGTPPDLTNPPKGDAFALRSSYAMKIDFEQEPPMFKVSDTHYVKSWLLHPDAPKVEPPEAVKAKMRKLANTFEKPVLVREVE.

The region spanning 8–259 (LEVKDLAISF…PRHPYTWGLL (252 aa)) is the ABC transporter domain. 44-51 (GESGSGKS) is an ATP binding site.

Belongs to the ABC transporter superfamily. As to quaternary structure, the complex is composed of two ATP-binding proteins (OppD and OppF), two transmembrane proteins (OppB and OppC) and a solute-binding protein (OppA).

The protein localises to the cell membrane. The catalysed reaction is a [peptide](out) + ATP + H2O = a [peptide](in) + ADP + phosphate + H(+). Functionally, part of the ABC transporter complex OppABCDF involved in the uptake of oligopeptides. Probably responsible for energy coupling to the transport system. Required for sporulation and genetic competence. This chain is Oligopeptide transport ATP-binding protein OppD, found in Bacillus subtilis (strain 168).